An 854-amino-acid chain; its full sequence is Nucleolar MIF4G domain-containing protein 1 (854 aa).

A necessary for nucleolar localization and for targeting PPP1CA to the nucleolus region spans residues P2–Q275. S60 bears the Phosphoserine mark. Disordered stretches follow at residues E66 to F215 and S231 to Y333. Over residues P76–Q99 the composition is skewed to basic residues. The segment covering S104–V113 has biased composition (gly residues). Residues V128 to T173 show a composition bias toward low complexity. The span at R188–L197 shows a compositional bias: basic and acidic residues. The segment covering S265–D280 has biased composition (acidic residues). Composition is skewed to basic and acidic residues over residues V281–S291, R303–S315, and Q322–E331. The Required for efficient binding to PPP1CA and for targeting PPP1CA to the nucleolus signature appears at K301–F304. Residues S311, S314, and S315 each carry the phosphoserine modification. The MIF4G domain occupies K356–D553. The 117-residue stretch at D648–F764 folds into the MI domain.

This sequence belongs to the CWC22 family. May interact with EIF4A1, EIF4A2 and EIF4A3. Interacts with PPP1CA and PPP1CC.

The protein localises to the nucleus. Its subcellular location is the nucleolus. In terms of biological role, plays a role in targeting PPP1CA to the nucleolus. This chain is Nucleolar MIF4G domain-containing protein 1 (Nom1), found in Mus musculus (Mouse).